The sequence spans 299 residues: Ribosomal RNA small subunit methyltransferase H 1 (299 aa).

Residues 31–33 (GGH), Asp-50, Phe-76, Asp-97, and Gln-104 each bind S-adenosyl-L-methionine.

It belongs to the methyltransferase superfamily. RsmH family.

The protein localises to the cytoplasm. It carries out the reaction cytidine(1402) in 16S rRNA + S-adenosyl-L-methionine = N(4)-methylcytidine(1402) in 16S rRNA + S-adenosyl-L-homocysteine + H(+). In terms of biological role, specifically methylates the N4 position of cytidine in position 1402 (C1402) of 16S rRNA. In Acholeplasma laidlawii (strain PG-8A), this protein is Ribosomal RNA small subunit methyltransferase H 1.